Reading from the N-terminus, the 88-residue chain is Small ribosomal subunit protein bS18 (88 aa).

The interval 1-22 is disordered; that stretch reads MSTKNAKPKKEAQRRPSRKAKV.

This sequence belongs to the bacterial ribosomal protein bS18 family. As to quaternary structure, part of the 30S ribosomal subunit. Forms a tight heterodimer with protein bS6.

In terms of biological role, binds as a heterodimer with protein bS6 to the central domain of the 16S rRNA, where it helps stabilize the platform of the 30S subunit. The chain is Small ribosomal subunit protein bS18 (rpsR) from Thermus thermophilus.